A 119-amino-acid chain; its full sequence is Large ribosomal subunit protein bL20 (119 aa).

The protein belongs to the bacterial ribosomal protein bL20 family.

In terms of biological role, binds directly to 23S ribosomal RNA and is necessary for the in vitro assembly process of the 50S ribosomal subunit. It is not involved in the protein synthesizing functions of that subunit. The sequence is that of Large ribosomal subunit protein bL20 from Sorangium cellulosum (strain So ce56) (Polyangium cellulosum (strain So ce56)).